We begin with the raw amino-acid sequence, 251 residues long: Pyruvate formate-lyase-activating enzyme (251 aa).

Positions 15 to 244 (VDGPGLRYIL…KAAYRYVNFK (230 aa)) constitute a Radical SAM core domain. [4Fe-4S] cluster-binding residues include Cys-29, Cys-33, and Cys-36. Residues 35 to 37 (YCH), Gly-79, 134 to 136 (DIK), and His-207 contribute to the S-adenosyl-L-methionine site.

This sequence belongs to the organic radical-activating enzymes family. It depends on [4Fe-4S] cluster as a cofactor.

It is found in the cytoplasm. It carries out the reaction glycyl-[formate C-acetyltransferase] + reduced [flavodoxin] + S-adenosyl-L-methionine = glycin-2-yl radical-[formate C-acetyltransferase] + semiquinone [flavodoxin] + 5'-deoxyadenosine + L-methionine + H(+). Activation of pyruvate formate-lyase under anaerobic conditions by generation of an organic free radical, using S-adenosylmethionine and reduced flavodoxin as cosubstrates to produce 5'-deoxy-adenosine. This Staphylococcus aureus (strain N315) protein is Pyruvate formate-lyase-activating enzyme (pflA).